The sequence spans 222 residues: 7-cyano-7-deazaguanine synthase (222 aa).

11–21 (FSGGQDSTTCL) is a binding site for ATP. The Zn(2+) site is built by C187, C195, C198, and C201.

Belongs to the QueC family. The cofactor is Zn(2+).

It catalyses the reaction 7-carboxy-7-deazaguanine + NH4(+) + ATP = 7-cyano-7-deazaguanine + ADP + phosphate + H2O + H(+). It participates in purine metabolism; 7-cyano-7-deazaguanine biosynthesis. In terms of biological role, catalyzes the ATP-dependent conversion of 7-carboxy-7-deazaguanine (CDG) to 7-cyano-7-deazaguanine (preQ(0)). This Actinobacillus pleuropneumoniae serotype 5b (strain L20) protein is 7-cyano-7-deazaguanine synthase.